Here is a 170-residue protein sequence, read N- to C-terminus: ATP synthase subunit b (170 aa).

The helical transmembrane segment at 15 to 37 (FNLFETNILNWAVVIFGLYKFLP) threads the bilayer. The disordered stretch occupies residues 72 to 98 (AKKDLSSAEEKASQIKADSLKRSESIR).

It belongs to the ATPase B chain family. F-type ATPases have 2 components, F(1) - the catalytic core - and F(0) - the membrane proton channel. F(1) has five subunits: alpha(3), beta(3), gamma(1), delta(1), epsilon(1). F(0) has four main subunits: a(1), b(1), b'(1) and c(10-14). The alpha and beta chains form an alternating ring which encloses part of the gamma chain. F(1) is attached to F(0) by a central stalk formed by the gamma and epsilon chains, while a peripheral stalk is formed by the delta, b and b' chains.

Its subcellular location is the cellular thylakoid membrane. F(1)F(0) ATP synthase produces ATP from ADP in the presence of a proton or sodium gradient. F-type ATPases consist of two structural domains, F(1) containing the extramembraneous catalytic core and F(0) containing the membrane proton channel, linked together by a central stalk and a peripheral stalk. During catalysis, ATP synthesis in the catalytic domain of F(1) is coupled via a rotary mechanism of the central stalk subunits to proton translocation. In terms of biological role, component of the F(0) channel, it forms part of the peripheral stalk, linking F(1) to F(0). This Prochlorococcus marinus (strain MIT 9215) protein is ATP synthase subunit b.